The primary structure comprises 175 residues: Probable coatomer subunit zeta-A (175 aa).

Belongs to the adaptor complexes small subunit family. In terms of assembly, oligomeric complex that consists of at least the alpha, beta, beta', gamma, delta, epsilon and zeta subunits.

It is found in the cytoplasm. The protein localises to the golgi apparatus membrane. It localises to the cytoplasmic vesicle. Its subcellular location is the COPI-coated vesicle membrane. In terms of biological role, the coatomer is a cytosolic protein complex that binds to dilysine motifs and reversibly associates with Golgi non-clathrin-coated vesicles, which further mediate biosynthetic protein transport from the ER, via the Golgi up to the trans Golgi network. Coatomer complex is required for budding from Golgi membranes, and is essential for the retrograde Golgi-to-ER transport of dilysine-tagged proteins. The zeta subunit may be involved in regulating the coat assembly and, hence, the rate of biosynthetic protein transport due to its association-dissociation properties with the coatomer complex. The protein is Probable coatomer subunit zeta-A (copZa) of Dictyostelium discoideum (Social amoeba).